The sequence spans 978 residues: Transcription factor MYCGRDRAFT_87993 (978 aa).

C2H2-type zinc fingers lie at residues 2-24 (VFCTYCGQSFTRDEHLERHILTH) and 30-52 (FKCFTCHMSFARRDLLQRHYTVH). The segment at residues 79-105 (CSNCAKTKTKCDKKFPCSRCAGRNLRC) is a DNA-binding region (zn(2)-C6 fungal-type). Disordered stretches follow at residues 113–231 (ASKN…SPRF) and 426–445 (THREGRGTSNGSHSPNPSGA). A compositionally biased stretch (low complexity) spans 152–165 (SSSPSSQKSGTPIS). The segment covering 432–445 (GTSNGSHSPNPSGA) has biased composition (polar residues).

It localises to the nucleus. In terms of biological role, transcription factor; part of the gene cluster 29 that mediates the biosynthesis of dihydroxynaphthalene (DHN)-melanin, a bluish-green pigment forming a dark layer in the conidial wall that protects the conidia from UV radiations. The protein is Transcription factor MYCGRDRAFT_87993 of Zymoseptoria tritici (strain CBS 115943 / IPO323) (Speckled leaf blotch fungus).